A 330-amino-acid polypeptide reads, in one-letter code: Phosphate acyltransferase (330 aa).

This sequence belongs to the PlsX family. Homodimer. Probably interacts with PlsY.

The protein localises to the cytoplasm. The enzyme catalyses a fatty acyl-[ACP] + phosphate = an acyl phosphate + holo-[ACP]. Its pathway is lipid metabolism; phospholipid metabolism. Catalyzes the reversible formation of acyl-phosphate (acyl-PO(4)) from acyl-[acyl-carrier-protein] (acyl-ACP). This enzyme utilizes acyl-ACP as fatty acyl donor, but not acyl-CoA. The protein is Phosphate acyltransferase of Teredinibacter turnerae (strain ATCC 39867 / T7901).